Reading from the N-terminus, the 115-residue chain is Small nuclear ribonucleoprotein Sm D2 (115 aa).

Residues 30 to 115 enclose the Sm domain; it reads LSVLQQAVKN…VVLVVRIPSA (86 aa).

The protein belongs to the snRNP core protein family. Belongs to the 40S cdc5-associated complex (or cwf complex), a spliceosome sub-complex reminiscent of a late-stage spliceosome composed of the U2, U5 and U6 snRNAs and at least brr2, cdc5, cwf2/prp3, cwf3/syf1, cwf4/syf3, cwf5/ecm2, spp42/cwf6, cwf7/spf27, cwf8, cwf9, cwf10, cwf11, cwf12, prp45/cwf13, cwf14, cwf15, cwf16, cwf17, cwf18, cwf19, cwf20, cwf21, cwf22, cwf23, cwf24, cwf25, cwf26, cyp7/cwf27, cwf28, cwf29/ist3, lea1, msl1, prp5/cwf1, prp10, prp12/sap130, prp17, prp22, sap61, sap62, sap114, sap145, slu7, smb1, smd1, smd3, smf1, smg1 and syf2.

The protein localises to the nucleus. It is found in the cytoplasm. It localises to the cytosol. Plays a role in pre-mRNA splicing as a core component of the spliceosomal U1, U2, U4 and U5 small nuclear ribonucleoproteins (snRNPs), the building blocks of the spliceosome. The sequence is that of Small nuclear ribonucleoprotein Sm D2 (smd2) from Schizosaccharomyces pombe (strain 972 / ATCC 24843) (Fission yeast).